A 167-amino-acid polypeptide reads, in one-letter code: DNA-directed RNA polymerase 19 kDa subunit (167 aa).

The interval 15–41 (DNDYKSYDEDDDSISDIGETSDDCCTT) is disordered. A compositionally biased stretch (acidic residues) spans 22–36 (DEDDDSISDIGETSD).

The protein belongs to the poxviridae DNA-directed RNA polymerase 19 kDa subunit family. The DNA-dependent RNA polymerase used for intermediate and late genes expression consists of eight subunits (147) kDa, 133 kDa, 35 kDa, 30 kDa, 22 kDa, 19 kDa, 18 kDa and 7 kDa totalling more than 500 kDa in mass. The same holoenzyme, with the addition of the transcription-specificity factor RAP94, is used for early gene expression.

Its subcellular location is the virion. The catalysed reaction is RNA(n) + a ribonucleoside 5'-triphosphate = RNA(n+1) + diphosphate. Functionally, part of the DNA-dependent RNA polymerase which catalyzes the transcription of viral DNA into RNA using the four ribonucleoside triphosphates as substrates. Responsible for the transcription of early, intermediate and late genes. DNA-dependent RNA polymerase associates with the early transcription factor (ETF) thereby allowing the early genes transcription. Late transcription, and probably also intermediate transcription, require newly synthesized RNA polymerase. This is DNA-directed RNA polymerase 19 kDa subunit (RPO19) from Vertebrata (FPV).